A 470-amino-acid polypeptide reads, in one-letter code: Annexin C1 (470 aa).

Positions 1-143 are disordered; that stretch reads MYGQQNNYGA…QGQSPMMYLG (143 aa). Low complexity predominate over residues 15-34; that stretch reads QWGQAPPQGYQPGYQNGPPA. A compositionally biased stretch (pro residues) spans 82–92; it reads PQPPFGAPSPA. Low complexity-rich tracts occupy residues 93–110 and 128–138; these read PAGYGAPPTAPQGQYGAP and GYGSQPQGQSP. Annexin repeat units lie at residues 161–232, 233–304, 316–388, and 395–468; these read YDAR…LLSL, GPLG…MALS, QLVQ…FIAR, and DGVV…GIIE.

Belongs to the annexin family.

Functionally, does not appear to play a major role in virulence. May play a role in titan cell formation. In Cryptococcus neoformans var. grubii serotype A (strain H99 / ATCC 208821 / CBS 10515 / FGSC 9487) (Filobasidiella neoformans var. grubii), this protein is Annexin C1.